We begin with the raw amino-acid sequence, 317 residues long: Sulfate adenylyltransferase subunit 2 (317 aa).

Disordered stretches follow at residues 1-21 and 298-317; these read MPDSRPDTELSNPQSAKAPLD and RAIDRDQSGSMEKKKREGYF.

Belongs to the PAPS reductase family. CysD subfamily. Heterodimer composed of CysD, the smaller subunit, and CysN.

The catalysed reaction is sulfate + ATP + H(+) = adenosine 5'-phosphosulfate + diphosphate. Its pathway is sulfur metabolism; hydrogen sulfide biosynthesis; sulfite from sulfate: step 1/3. With CysN forms the ATP sulfurylase (ATPS) that catalyzes the adenylation of sulfate producing adenosine 5'-phosphosulfate (APS) and diphosphate, the first enzymatic step in sulfur assimilation pathway. APS synthesis involves the formation of a high-energy phosphoric-sulfuric acid anhydride bond driven by GTP hydrolysis by CysN coupled to ATP hydrolysis by CysD. This is Sulfate adenylyltransferase subunit 2 from Rhizobium etli (strain CIAT 652).